A 361-amino-acid chain; its full sequence is D-alanine--D-alanine ligase (361 aa).

An ATP-grasp domain is found at 134–344 (KLLLKSFDIP…FKDLVDNLID (211 aa)). 167–222 (KEVLGYPVIVKPAVLGSSIGINVAYSENQIESFIKEALKYDLTIVIEKFIEAREIE) contacts ATP. Residues aspartate 297, glutamate 311, and asparagine 313 each contribute to the Mg(2+) site.

It belongs to the D-alanine--D-alanine ligase family. Mg(2+) is required as a cofactor. The cofactor is Mn(2+).

The protein localises to the cytoplasm. It catalyses the reaction 2 D-alanine + ATP = D-alanyl-D-alanine + ADP + phosphate + H(+). The protein operates within cell wall biogenesis; peptidoglycan biosynthesis. Functionally, cell wall formation. This is D-alanine--D-alanine ligase from Borreliella burgdorferi (strain ZS7) (Borrelia burgdorferi).